The sequence spans 123 residues: U9-barytoxin-Tl1a (123 aa).

The N-terminal stretch at 1 to 18 is a signal peptide; sequence MNTMITFLVLFVLTAANG. The propeptide occupies 19 to 77; that stretch reads APEANERKIPEAIHNEDQSLAEMAEELMFFLQQTEFEAPLLQEEEEAEXAEXRNSRERR. Disulfide bonds link C78–C93, C85–C98, and C92–C112.

It belongs to the neurotoxin 14 (magi-1) family. 05 (ICK-7) subfamily. ICK-7 sub-subfamily. In terms of tissue distribution, expressed by the venom gland.

It localises to the secreted. Ion channel inhibitor. The sequence is that of U9-barytoxin-Tl1a from Trittame loki (Brush-footed trapdoor spider).